Reading from the N-terminus, the 391-residue chain is Ammonium transporter Amt1 (391 aa).

Over Met1–Ala7 the chain is Extracellular. Residues Trp8 to Tyr27 traverse the membrane as a helical segment. Residues Ala28 to Asn38 are Cytoplasmic-facing. The chain crosses the membrane as a helical span at residues Met39–Tyr57. The Extracellular portion of the chain corresponds to Gly58–Phe89. The helical transmembrane segment at Met90–Ser106 threads the bilayer. Residues Ala107 to Lys113 are Cytoplasmic-facing. Residues Val114–Trp137 traverse the membrane as a helical segment. Residues Gly138–Gly152 are Extracellular-facing. Residues Gly153–Thr170 traverse the membrane as a helical segment. The Cytoplasmic segment spans residues Ile171–Pro188. A helical membrane pass occupies residues Leu189–Ser208. Residues Ala209 to Ile217 are Extracellular-facing. Residues Asn218–Ile237 form a helical membrane-spanning segment. Over Gly238–Gly245 the chain is Cytoplasmic. A helical membrane pass occupies residues Ser246–Ala263. Topologically, residues Ala264 to Asp268 are extracellular. A helical membrane pass occupies residues Val269–Met287. Over Asp288–Asp300 the chain is Cytoplasmic. The chain crosses the membrane as a helical span at residues Ala301 to Leu319. Topologically, residues Ala320–Leu337 are extracellular. Residues Leu338–Val363 traverse the membrane as a helical segment. The Cytoplasmic portion of the chain corresponds to Asp364–Thr391.

Belongs to the ammonia transporter channel (TC 1.A.11.2) family. As to quaternary structure, homotrimer.

The protein resides in the cell membrane. Functionally, involved in the uptake of ammonium/ammonia (NH(4)(+)/NH(3)). Transport is electrogenic. Transport the ammonium and methylammonium cation with high specificity. The polypeptide is Ammonium transporter Amt1 (Archaeoglobus fulgidus (strain ATCC 49558 / DSM 4304 / JCM 9628 / NBRC 100126 / VC-16)).